The chain runs to 305 residues: NDP-polyphosphate phosphotransferase 1 (305 aa).

Belongs to the polyphosphate kinase 2 (PPK2) family. Class I subfamily.

It carries out the reaction [phosphate](n) + ATP = [phosphate](n+1) + ADP. The enzyme catalyses [phosphate](n) + CTP = [phosphate](n+1) + CDP. It catalyses the reaction [phosphate](n) + GTP = [phosphate](n+1) + GDP. The catalysed reaction is [phosphate](n) + UTP = [phosphate](n+1) + UDP. Its activity is regulated as follows. Shows little dependence on metals. Its function is as follows. Uses inorganic polyphosphate (polyP) as a donor to convert NDP to NTP. PolyP hydrolysis is slightly faster with GDP, but it can also use ADP, CDP and UDP. The chain is NDP-polyphosphate phosphotransferase 1 from Ruegeria pomeroyi (strain ATCC 700808 / DSM 15171 / DSS-3) (Silicibacter pomeroyi).